The sequence spans 546 residues: Probable protein kinase UbiB (546 aa).

One can recognise a Protein kinase domain in the interval 124 to 502 (DFDITPLASA…RVKQGQSRYL (379 aa)). ATP is bound by residues 130-138 (LASASIAQV) and Lys153. The active-site Proton acceptor is Asp288. 2 helical membrane-spanning segments follow: residues 501-518 (YLFGIGATLMLSSTLLFI) and 523-542 (WGMSPGWLMAGGILVWLIGW).

The protein belongs to the ABC1 family. UbiB subfamily.

Its subcellular location is the cell inner membrane. Its pathway is cofactor biosynthesis; ubiquinone biosynthesis [regulation]. Its function is as follows. Is probably a protein kinase regulator of UbiI activity which is involved in aerobic coenzyme Q (ubiquinone) biosynthesis. The chain is Probable protein kinase UbiB from Cronobacter sakazakii (strain ATCC BAA-894) (Enterobacter sakazakii).